A 559-amino-acid polypeptide reads, in one-letter code: DNA ligase (559 aa).

Glu231 is an ATP binding site. The active-site N6-AMP-lysine intermediate is Lys233. ATP-binding residues include Arg238 and Glu285. 2 residues coordinate Mg(2+): Glu285 and Glu379. ATP contacts are provided by Lys384 and Lys399.

The protein belongs to the ATP-dependent DNA ligase family. As to quaternary structure, interacts with host TOP2A and TOP2B. The cofactor is Mg(2+).

The protein resides in the host cytoplasm. It catalyses the reaction ATP + (deoxyribonucleotide)n-3'-hydroxyl + 5'-phospho-(deoxyribonucleotide)m = (deoxyribonucleotide)n+m + AMP + diphosphate.. DNA ligase that seals nicks in double-stranded DNA during DNA replication, DNA recombination and DNA repair. Recruits cellular topoisomerase II to sites of viral replication and assembly. The polypeptide is DNA ligase (OPG180) (Monkeypox virus).